Consider the following 243-residue polypeptide: Vesicle-associated membrane protein-associated protein B (243 aa).

Residue alanine 2 is modified to N-acetylalanine. Over 2 to 218 (AKVEQVLSLE…AALAATGKEE (217 aa)) the chain is Cytoplasmic. Positions 7–124 (VLSLEPQHEL…MDSKLRCVFE (118 aa)) constitute an MSP domain. Residue serine 146 is modified to Phosphoserine. A Glycyl lysine isopeptide (Lys-Gly) (interchain with G-Cter in SUMO1) cross-link involves residue lysine 147. Phosphoserine occurs at positions 156 and 159. Residues 161–196 (LDDTEVKKVMEECRRLQGEVQRLREESRQLKEEDGL) adopt a coiled-coil conformation. Residue serine 206 is modified to Phosphoserine. The helical; Anchor for type IV membrane protein transmembrane segment at 219–239 (GLSARLLALVVLFFIVGVIIG) threads the bilayer.

This sequence belongs to the VAMP-associated protein (VAP) (TC 9.B.17) family. As to quaternary structure, homodimer, and heterodimer with VAPA. Interacts with VAMP1 and VAMP2. Interacts (via MSP domain) with ZFYVE27. Interacts with RMDN3. Interacts with KIF5A in a ZFYVE27-dependent manner. Interacts (via MSP domain) with STARD3 (via phospho-FFAT motif). Interacts with STARD3NL (via FFAT motif). Interacts with CERT1. Interacts with PLEKHA3 and SACM1L to form a ternary complex. Interacts with VPS13A (via FFAT motif). Interacts with RB1CC1 (via phosphorylated FFAT motif), MIGA2 (via phosphorylated FFAT motif), RMDN3 (via phosphorylated FFAT motif), OSBPL1A (via FFAT motif), KCNB1 (via phosphorylated FFAT motif) and KCNB2 (via phosphorylated FFAT motif). Interacts (via MSP domain) with WDR44 (via FFAT motif); the interactions connect the endoplasmic reticulum (ER) with the endosomal tubule.

It localises to the endoplasmic reticulum membrane. Endoplasmic reticulum (ER)-anchored protein that mediates the formation of contact sites between the ER and endosomes via interaction with FFAT motif-containing proteins such as STARD3 or WDR44. Interacts with STARD3 in a FFAT motif phosphorylation dependent manner. Via interaction with WDR44 participates in neosynthesized protein export. Participates in the endoplasmic reticulum unfolded protein response (UPR) by inducing ERN1/IRE1 activity. Involved in cellular calcium homeostasis regulation. The sequence is that of Vesicle-associated membrane protein-associated protein B from Mus musculus (Mouse).